An 85-amino-acid chain; its full sequence is UPF0386 protein MXAN_1729 (85 aa).

The protein belongs to the UPF0386 family.

The protein is UPF0386 protein MXAN_1729 of Myxococcus xanthus (strain DK1622).